The following is an 859-amino-acid chain: Envelope glycoprotein (859 aa).

Positions 1 to 6 (MVSIAF) are excised as a propeptide. Residues 7–614 (YGGIPGGIST…KDLWSHIGNW (608 aa)) are Extracellular-facing. N-linked (GlcNAc...) asparagine; by host glycosylation is found at Asn40, Asn112, Asn141, Asn148, Asn186, Asn214, Asn233, Asn244, Asn340, Asn368, Asn399, Asn406, and Asn411. The fusion peptide stretch occupies residues 446–466 (FGISAIVAAIVAATAIAASAT). N-linked (GlcNAc...) asparagine; by host glycans are attached at residues Asn483 and Asn490. The tract at residues 498–513 (LIERQIKILYAMILQT) is immunosuppression. N-linked (GlcNAc...) asparagine; by host glycosylation is found at Asn550 and Asn557. 2 coiled-coil regions span residues 576–624 (ILTT…SIIK) and 663–699 (KKFH…YYKQ). Residues 615–635 (IPGLGASIIKYIVMFLLIYLL) traverse the membrane as a helical segment. The Cytoplasmic portion of the chain corresponds to 636–859 (LTSSPKILRA…TSHVSMPQYV (224 aa)).

In terms of assembly, the mature envelope protein (Env) consists of a trimer of SU-TM heterodimers attached by noncovalent interactions or by a labile interchain disulfide bond. Specific enzymatic cleavages in vivo yield mature proteins. Envelope glycoproteins are synthesized as an inactive precursor that is N-glycosylated and processed likely by host cell furin or by a furin-like protease in the Golgi to yield the mature SU and TM proteins. The cleavage site between SU and TM requires the minimal sequence [KR]-X-[KR]-R.

It is found in the virion membrane. It localises to the host cell membrane. Functionally, the surface protein (SU) attaches the virus to the host cell by binding to its receptor. This interaction triggers the refolding of the transmembrane protein (TM) and is thought to activate its fusogenic potential by unmasking its fusion peptide. Fusion occurs at the host cell plasma membrane. Its function is as follows. The transmembrane protein (TM) acts as a class I viral fusion protein. Under the current model, the protein has at least 3 conformational states: pre-fusion native state, pre-hairpin intermediate state, and post-fusion hairpin state. During viral and target cell membrane fusion, the coiled coil regions (heptad repeats) assume a trimer-of-hairpins structure, positioning the fusion peptide in close proximity to the C-terminal region of the ectodomain. The formation of this structure appears to drive apposition and subsequent fusion of viral and target cell membranes. Membranes fusion leads to delivery of the nucleocapsid into the cytoplasm. This is Envelope glycoprotein (env) from Equus asinus (Donkey).